Consider the following 124-residue polypeptide: Large ribosomal subunit protein bL12 (124 aa).

It belongs to the bacterial ribosomal protein bL12 family. As to quaternary structure, homodimer. Part of the ribosomal stalk of the 50S ribosomal subunit. Forms a multimeric L10(L12)X complex, where L10 forms an elongated spine to which 2 to 4 L12 dimers bind in a sequential fashion. Binds GTP-bound translation factors.

Functionally, forms part of the ribosomal stalk which helps the ribosome interact with GTP-bound translation factors. Is thus essential for accurate translation. The protein is Large ribosomal subunit protein bL12 of Paracoccus denitrificans (strain Pd 1222).